The primary structure comprises 396 residues: Acetate kinase (396 aa).

Position 7 (asparagine 7) interacts with Mg(2+). Lysine 14 contributes to the ATP binding site. Position 91 (arginine 91) interacts with substrate. The active-site Proton donor/acceptor is the aspartate 148. ATP contacts are provided by residues 208-212 (HLGNG), 283-285 (DFR), and 331-335 (GIGEN). Glutamate 384 contacts Mg(2+).

Belongs to the acetokinase family. As to quaternary structure, homodimer. It depends on Mg(2+) as a cofactor. Mn(2+) is required as a cofactor.

Its subcellular location is the cytoplasm. The enzyme catalyses acetate + ATP = acetyl phosphate + ADP. Its pathway is metabolic intermediate biosynthesis; acetyl-CoA biosynthesis; acetyl-CoA from acetate: step 1/2. Its function is as follows. Catalyzes the formation of acetyl phosphate from acetate and ATP. Can also catalyze the reverse reaction. The protein is Acetate kinase of Desulforamulus reducens (strain ATCC BAA-1160 / DSM 100696 / MI-1) (Desulfotomaculum reducens).